The chain runs to 519 residues: Cilia- and flagella-associated protein 157 (519 aa).

Over residues 1 to 11 the composition is skewed to basic residues; it reads MPPKKKGKRGP. Residues 1–25 are disordered; that stretch reads MPPKKKGKRGPSAKTKEKETVRVAS. 2 coiled-coil regions span residues 28–185 and 241–356; these read VTEQ…EKKV and IELI…QRTL.

Belongs to the CFAP157 family.

It localises to the cytoplasm. The protein localises to the cytoskeleton. The protein resides in the cilium basal body. Its function is as follows. Specifically required during spermatogenesis for flagellum morphogenesis and sperm motility. The chain is Cilia- and flagella-associated protein 157 from Xenopus tropicalis (Western clawed frog).